A 251-amino-acid polypeptide reads, in one-letter code: uncharacterized protein (251 aa).

The next 7 helical transmembrane spans lie at 48–68 (WMVG…VELI), 88–108 (VLWG…LVAN), 110–130 (IPLL…FIWV), 132–152 (AMVW…GSSF), 158–178 (IGVS…GLFV), 184–204 (IIGC…MPVL), and 209–229 (GVSW…AYLL).

The protein to M.tuberculosis Rv1337.

The protein localises to the cell membrane. This is an uncharacterized protein from Mycobacterium leprae (strain TN).